Consider the following 1434-residue polypeptide: Ankyrin and armadillo repeat-containing protein (1434 aa).

A helical transmembrane segment spans residues 309–329; that stretch reads IRRGIGYLKLICFLIPFLLSL. ANK repeat units lie at residues 532–561, 569–598, 602–631, 638–667, and 671–701; these read AGYTIFHHAALHNRVSIICQLCNANFKVNQ, QGPTPLHLAAQACSLETTVCLLCSKADYTL, RGWMPIHFAAFYDNVCIIIALCRKDPSLLE, NQCTPLLLAATSGALDTIQYLFSIGANWRK, and KGNNIIHLSVLTFHTEVLKYIIKLNIPELPV. ARM repeat units follow at residues 732 to 771, 773 to 812, 814 to 852, 855 to 894, 897 to 936, and 1072 to 1112; these read DQYWRCILDAGTIPALINLLKSSKIKLQCKTVGLLSNIST, KSAVHALVEAGGIPSLINLLVCDEPEVHSRCAVILYDIAQ, ENKDVIAKYNGIPSLINLLNLNIENVLVNVMNCIRVLCI, ENNQRAVREHKGLPYLIRFLSSDSDVLKAVSSAAIAEVGR, KEIQDAIAMEGAIPPLVALFKGKQISVQMKGAMAVESLAS, and PVSQ…CIVL.

Ubiquitously expressed with highest level in pancreas and lowest in skeletal muscle.

Its subcellular location is the membrane. The polypeptide is Ankyrin and armadillo repeat-containing protein (ANKAR) (Homo sapiens (Human)).